Consider the following 123-residue polypeptide: Small ribosomal subunit protein uS13c (123 aa).

The tract at residues Arg89–Lys123 is disordered. Residues Gln102–Lys123 show a composition bias toward basic residues.

This sequence belongs to the universal ribosomal protein uS13 family. As to quaternary structure, part of the 30S ribosomal subunit.

Its subcellular location is the plastid. It is found in the chloroplast. Functionally, located at the top of the head of the 30S subunit, it contacts several helices of the 16S rRNA. The chain is Small ribosomal subunit protein uS13c from Phaeodactylum tricornutum (strain CCAP 1055/1).